A 182-amino-acid chain; its full sequence is Homeobox expressed in ES cells 1-A (182 aa).

The segment at residues 103-163 is a DNA-binding region (homeobox); that stretch reads YRGRRPRTAF…QNRRAKLKRS (61 aa).

Belongs to the ANF homeobox family. Initially expressed in the anterior dorsal region of early embryos and later exclusively in the primordium of the anterior pituitary gland.

The protein resides in the nucleus. Its function is as follows. Appears to be involved in the regional specification of the anterior head of Xenopus embryos. The sequence is that of Homeobox expressed in ES cells 1-A (hesx1-a) from Xenopus laevis (African clawed frog).